Here is a 447-residue protein sequence, read N- to C-terminus: UDP-N-acetylglucosamine 1-carboxyvinyltransferase (447 aa).

Position 27-28 (27-28 (KN)) interacts with phosphoenolpyruvate. Residue R97 participates in UDP-N-acetyl-alpha-D-glucosamine binding. The active-site Proton donor is C121. Residue C121 is modified to 2-(S-cysteinyl)pyruvic acid O-phosphothioketal. Residues 126 to 130 (RPVDL), D314, and V336 contribute to the UDP-N-acetyl-alpha-D-glucosamine site.

This sequence belongs to the EPSP synthase family. MurA subfamily.

Its subcellular location is the cytoplasm. It catalyses the reaction phosphoenolpyruvate + UDP-N-acetyl-alpha-D-glucosamine = UDP-N-acetyl-3-O-(1-carboxyvinyl)-alpha-D-glucosamine + phosphate. The protein operates within cell wall biogenesis; peptidoglycan biosynthesis. In terms of biological role, cell wall formation. Adds enolpyruvyl to UDP-N-acetylglucosamine. This chain is UDP-N-acetylglucosamine 1-carboxyvinyltransferase, found in Trichormus variabilis (strain ATCC 29413 / PCC 7937) (Anabaena variabilis).